Reading from the N-terminus, the 530-residue chain is Synembryn-like chaperone C3E7.04c (530 aa).

Residues 492-512 (SFIYHCYHSFVGPIHILLLMF) form a helical membrane-spanning segment.

Belongs to the synembryn family.

The protein localises to the membrane. Chaperone that specifically binds and folds some, but not all, nascent G alpha proteins prior to G protein heterotrimer formation, promoting their stability and activity. Also acts as a guanine nucleotide exchange factor (GEF) for G alpha proteins by stimulating exchange of bound GDP for free GTP. The protein is Synembryn-like chaperone C3E7.04c of Schizosaccharomyces pombe (strain 972 / ATCC 24843) (Fission yeast).